A 66-amino-acid chain; its full sequence is Large ribosomal subunit protein bL31 (66 aa).

The Zn(2+) site is built by Cys16, Cys18, Cys36, and Cys39.

Belongs to the bacterial ribosomal protein bL31 family. Type A subfamily. Part of the 50S ribosomal subunit. It depends on Zn(2+) as a cofactor.

In terms of biological role, binds the 23S rRNA. The sequence is that of Large ribosomal subunit protein bL31 from Bacillus licheniformis (strain ATCC 14580 / DSM 13 / JCM 2505 / CCUG 7422 / NBRC 12200 / NCIMB 9375 / NCTC 10341 / NRRL NRS-1264 / Gibson 46).